We begin with the raw amino-acid sequence, 72 residues long: Gas vesicle protein A (72 aa).

The protein belongs to the gas vesicle GvpA family. The gas vesicle shell is 2 nm thick and consists of a single layer of this protein. It forms helical ribs nearly perpendicular to the long axis of the vesicle.

It localises to the gas vesicle shell. Its function is as follows. Gas vesicles are hollow, gas filled proteinaceous nanostructures found in some microorganisms. During planktonic growth they allow positioning of the organism at a favorable depth for light or nutrient acquisition. GvpA forms the protein shell. This chain is Gas vesicle protein A, found in Geotalea uraniireducens (strain Rf4) (Geobacter uraniireducens).